A 470-amino-acid chain; its full sequence is Acetyl-CoA decarbonylase/synthase complex subunit gamma 2 (470 aa).

A 4Fe-4S domain is found at 1 to 60 (MKINSPLEAYKYLPQTNCGECGQPTCMAFASTLIDRSGKTTDCPPLIKEKKFAKKLAELD). The [4Fe-4S] cluster site is built by cysteine 18, cysteine 21, cysteine 26, and cysteine 43.

Heterodimer of delta and gamma chains. The ACDS complex is made up of alpha, epsilon, beta, gamma and delta chains with a probable stoichiometry of (alpha(2)epsilon(2))(4)-beta(8)-(gamma(1)delta(1))(8). The cofactor is corrinoid. Requires [4Fe-4S] cluster as cofactor.

It carries out the reaction 5,6,7,8-tetrahydrosarcinapterin + methyl-Co(III)-[corrinoid Fe-S protein] = 5-methyltetrahydrosarcinapterin + Co(I)-[corrinoid Fe-S protein] + H(+). It functions in the pathway one-carbon metabolism; methanogenesis from acetate. Its function is as follows. Part of a complex that catalyzes the reversible cleavage of acetyl-CoA, allowing growth on acetate as sole source of carbon and energy. In Methanosarcina mazei (strain ATCC BAA-159 / DSM 3647 / Goe1 / Go1 / JCM 11833 / OCM 88) (Methanosarcina frisia), this protein is Acetyl-CoA decarbonylase/synthase complex subunit gamma 2.